A 336-amino-acid chain; its full sequence is F-box protein PP2-B1 (336 aa).

The interval Met-1–Asp-22 is disordered. The segment covering Ser-9–Ser-18 has biased composition (gly residues). One can recognise an F-box domain in the interval Ala-29–Phe-75.

Part of a SCF (ASK-cullin-F-box) protein ligase complex. Interacts with SKP1A/ASK1 and SPK1B/ASK2.

It localises to the nucleus. Its pathway is protein modification; protein ubiquitination. Its function is as follows. Component of SCF(ASK-cullin-F-box) E3 ubiquitin ligase complexes, which may mediate the ubiquitination and subsequent proteasomal degradation of target proteins. The chain is F-box protein PP2-B1 (PP2B1) from Arabidopsis thaliana (Mouse-ear cress).